Consider the following 238-residue polypeptide: 2-C-methyl-D-erythritol 4-phosphate cytidylyltransferase (238 aa).

Belongs to the IspD/TarI cytidylyltransferase family. IspD subfamily.

It carries out the reaction 2-C-methyl-D-erythritol 4-phosphate + CTP + H(+) = 4-CDP-2-C-methyl-D-erythritol + diphosphate. It functions in the pathway isoprenoid biosynthesis; isopentenyl diphosphate biosynthesis via DXP pathway; isopentenyl diphosphate from 1-deoxy-D-xylulose 5-phosphate: step 2/6. Its function is as follows. Catalyzes the formation of 4-diphosphocytidyl-2-C-methyl-D-erythritol from CTP and 2-C-methyl-D-erythritol 4-phosphate (MEP). The protein is 2-C-methyl-D-erythritol 4-phosphate cytidylyltransferase of Acinetobacter baumannii (strain SDF).